Here is a 166-residue protein sequence, read N- to C-terminus: Cyanate hydratase (166 aa).

Catalysis depends on residues R92, E95, and S118.

This sequence belongs to the cyanase family.

It catalyses the reaction cyanate + hydrogencarbonate + 3 H(+) = NH4(+) + 2 CO2. Its function is as follows. Catalyzes the reaction of cyanate with bicarbonate to produce ammonia and carbon dioxide. This Sorghum bicolor (Sorghum) protein is Cyanate hydratase.